Consider the following 699-residue polypeptide: Glycine--tRNA ligase beta subunit (699 aa).

This sequence belongs to the class-II aminoacyl-tRNA synthetase family. In terms of assembly, tetramer of two alpha and two beta subunits.

It localises to the cytoplasm. It catalyses the reaction tRNA(Gly) + glycine + ATP = glycyl-tRNA(Gly) + AMP + diphosphate. The polypeptide is Glycine--tRNA ligase beta subunit (Bradyrhizobium diazoefficiens (strain JCM 10833 / BCRC 13528 / IAM 13628 / NBRC 14792 / USDA 110)).